The primary structure comprises 254 residues: Aquaporin TIP1-2 (254 aa).

The next 2 helical transmembrane spans lie at 24–44 (VAEF…GMAF) and 56–76 (AGLI…VSVG). An NPA 1 motif is present at residues 85–87 (NPA). 3 helical membrane-spanning segments follow: residues 103 to 123 (ALVY…LLKI), 144 to 164 (AVVL…ATAV), and 173 to 193 (VIAP…GGAF). The short motif at 199 to 201 (NPA) is the NPA 2 element. A helical membrane pass occupies residues 220 to 240 (WVGPLAGAAIAALVYDIIFIG).

Belongs to the MIP/aquaporin (TC 1.A.8) family. TIP (TC 1.A.8.10) subfamily.

It localises to the vacuole membrane. Functionally, aquaporins facilitate the transport of water and small neutral solutes across cell membranes. This chain is Aquaporin TIP1-2 (TIP1-2), found in Zea mays (Maize).